The chain runs to 63 residues: uncharacterized protein (63 aa).

This is an uncharacterized protein from Dictyostelium discoideum (Social amoeba).